The sequence spans 162 residues: ATP synthase subunit b 1 (162 aa).

Residues 1 to 21 (MLLTAEFWVAVAFVAFLVIVW) form a helical membrane-spanning segment.

It belongs to the ATPase B chain family. As to quaternary structure, F-type ATPases have 2 components, F(1) - the catalytic core - and F(0) - the membrane proton channel. F(1) has five subunits: alpha(3), beta(3), gamma(1), delta(1), epsilon(1). F(0) has three main subunits: a(1), b(2) and c(10-14). The alpha and beta chains form an alternating ring which encloses part of the gamma chain. F(1) is attached to F(0) by a central stalk formed by the gamma and epsilon chains, while a peripheral stalk is formed by the delta and b chains.

It is found in the cell inner membrane. F(1)F(0) ATP synthase produces ATP from ADP in the presence of a proton or sodium gradient. F-type ATPases consist of two structural domains, F(1) containing the extramembraneous catalytic core and F(0) containing the membrane proton channel, linked together by a central stalk and a peripheral stalk. During catalysis, ATP synthesis in the catalytic domain of F(1) is coupled via a rotary mechanism of the central stalk subunits to proton translocation. Functionally, component of the F(0) channel, it forms part of the peripheral stalk, linking F(1) to F(0). This Methylorubrum populi (strain ATCC BAA-705 / NCIMB 13946 / BJ001) (Methylobacterium populi) protein is ATP synthase subunit b 1.